The following is a 141-amino-acid chain: Large ribosomal subunit protein uL16 (141 aa).

Residues Met1–Asn17 show a composition bias toward basic residues. The interval Met1–Thr22 is disordered.

Belongs to the universal ribosomal protein uL16 family. As to quaternary structure, part of the 50S ribosomal subunit.

Binds 23S rRNA and is also seen to make contacts with the A and possibly P site tRNAs. This Campylobacter curvus (strain 525.92) protein is Large ribosomal subunit protein uL16.